A 745-amino-acid chain; its full sequence is MEEELQHSHCVNCVSRRCMTRPEPGISCDLIGCPLVCGAVFHSCKADEHRLLCPFERVPCLNSDFGCPFTMARNKVAEHLEMCPASVVCCTMEWNRWPVSYADRKSYENLSRDVDEVAQLDMALALQDQRMLLESLKVATMMSKATDKVSKPREQISVKSSVPEIPHANGLVSVDEESYGALYQATVETTRSLAAALDILNTATRDIGMLNTSVPNDMDEQQNARESLEDQNLKDQDHLYEEEIGAVGGIDYNDTNQNAQSEQNGSSDLLCDLNTSSYDTSALCNGFPLENICTQVIDQNQNLHGDSKQSNLTNGDCVASSDGTSKPSSSLAVAAQLREIIPSSALPNGTVQHILMPDDEGEGELCWKKVDLGDVKNVDVLSFSHAPSFNFLSNSCWSKPKEDKAVDTSDLEVAEDPMGLQGIDLITAALLFCLGDSPGGRGISDSRMADIYHIDVGTQTFSLPSAILATSTMVGEIASASACDHANPQLSNPSPFQTLGLDLVLECVARYQPKQRSMFTFVCGQLFRRKEFSSHFKNVHGDIHAGLNGWMEQRCPLAYYGCTYSQRRFCPSIQGAKIIHDRHLRSFGVQPCVSTVLVEPARNCVLGLHNDHLSSLPFEVLQHIAGFLDGFSLCQLSCVSKLMRDVCGSLLQSRGMVILQWGKRKYPEGNSSWQIKEKVWRFSTAFCSVNEWKFADILSMADHLKKCSYNVVEKREEAIPLPCMCVTRELTKEGRSLRSVLKPVL.

A TRAF-type zinc finger spans residues 48–109; the sequence is EHRLLCPFER…SYADRKSYEN (62 aa). Disordered stretches follow at residues 211–231 and 305–324; these read NTSVPNDMDEQQNARESLEDQ and GDSKQSNLTNGDCVASSDGT. Basic and acidic residues predominate over residues 222 to 231; the sequence is QNARESLEDQ. Positions 305–314 are enriched in polar residues; it reads GDSKQSNLTN. An F-box domain is found at 610-658; it reads NDHLSSLPFEVLQHIAGFLDGFSLCQLSCVSKLMRDVCGSLLQSRGMVI.

In terms of assembly, part of a SCF (SKP1-cullin-F-box) protein ligase complex. Interacts with SKP1, CUL1 and RBX1/ROC1. Auto-ubiquitinated. Post-translationally, may be neddylated. Neddylation may be required for E3 ligase activity.

Its pathway is protein modification; protein ubiquitination. Functionally, substrate-recognition component of the SCF (SKP1-CUL1-F-box protein)-type E3 ubiquitin ligase complex. Required for muscle atrophy following denervation. This is F-box only protein 30 (FBXO30) from Homo sapiens (Human).